Here is a 270-residue protein sequence, read N- to C-terminus: 4-hydroxy-tetrahydrodipicolinate reductase (270 aa).

NAD(+) contacts are provided by residues 8–13 (GAAGRM) and glutamate 34. Arginine 35 lines the NADP(+) pocket. NAD(+)-binding positions include 98 to 100 (GST) and 122 to 125 (SPNM). Histidine 155 functions as the Proton donor/acceptor in the catalytic mechanism. (S)-2,3,4,5-tetrahydrodipicolinate is bound at residue histidine 156. Lysine 159 acts as the Proton donor in catalysis. Residue 165–166 (GT) participates in (S)-2,3,4,5-tetrahydrodipicolinate binding.

This sequence belongs to the DapB family.

It is found in the cytoplasm. It carries out the reaction (S)-2,3,4,5-tetrahydrodipicolinate + NAD(+) + H2O = (2S,4S)-4-hydroxy-2,3,4,5-tetrahydrodipicolinate + NADH + H(+). The enzyme catalyses (S)-2,3,4,5-tetrahydrodipicolinate + NADP(+) + H2O = (2S,4S)-4-hydroxy-2,3,4,5-tetrahydrodipicolinate + NADPH + H(+). It participates in amino-acid biosynthesis; L-lysine biosynthesis via DAP pathway; (S)-tetrahydrodipicolinate from L-aspartate: step 4/4. In terms of biological role, catalyzes the conversion of 4-hydroxy-tetrahydrodipicolinate (HTPA) to tetrahydrodipicolinate. The chain is 4-hydroxy-tetrahydrodipicolinate reductase from Anaeromyxobacter dehalogenans (strain 2CP-C).